Reading from the N-terminus, the 29-residue chain is Dermaseptin-J9 (29 aa).

In terms of tissue distribution, expressed by the skin glands.

Its subcellular location is the secreted. Its function is as follows. Has antimicrobial activity. This Phasmahyla jandaia (Jandaia leaf frog) protein is Dermaseptin-J9.